The primary structure comprises 551 residues: Cilia- and flagella-associated protein 45 (551 aa).

Disordered regions lie at residues 1-30 (MPLS…TKAV) and 461-489 (RLEE…QQKE). Residues 157–526 (NNNKKLSDLE…IKRKKLEELR (370 aa)) adopt a coiled-coil conformation.

This sequence belongs to the CFAP45 family. As to quaternary structure, microtubule inner protein component of sperm flagellar doublet microtubules. Interacts with AK8; dimerization with AK8 may create a cavity at the interface of the dimer that can accommodate AMP. Interacts with CFAP52. Interacts with ENKUR. Directly interacts with DNALI1. Interacts with DNAH11. Interacts with DNAI1. In terms of tissue distribution, expressed in respiratory cells and in sperm (at protein level). Expressed in nasopharyngeal epithelium and trachea.

The protein localises to the cytoplasm. The protein resides in the cytoskeleton. Its subcellular location is the cilium axoneme. It is found in the flagellum axoneme. It localises to the cell projection. The protein localises to the cilium. The protein resides in the flagellum. Functionally, microtubule inner protein (MIP) part of the dynein-decorated doublet microtubules (DMTs) in cilia axoneme, which is required for motile cilia beating. It is an AMP-binding protein that may facilitate dynein ATPase-dependent ciliary and flagellar beating via adenine nucleotide homeostasis. May function as a donor of AMP to AK8 and hence promote ADP production. The polypeptide is Cilia- and flagella-associated protein 45 (Homo sapiens (Human)).